Reading from the N-terminus, the 570-residue chain is Putative pyruvate decarboxylase C3G9.11c (570 aa).

Residues D30 and H119 each coordinate pyruvate. Residues T396 and 419-421 each bind thiamine diphosphate; that span reads GSI. A Mg(2+)-binding site is contributed by D451. Thiamine diphosphate is bound by residues 452-453 and 478-483; these read GS and NKGYTI. The Mg(2+) site is built by N478 and G480. E484 is a binding site for pyruvate.

This sequence belongs to the TPP enzyme family. As to quaternary structure, homotetramer. Mg(2+) is required as a cofactor. Thiamine diphosphate serves as cofactor.

It localises to the cytoplasm. Its subcellular location is the nucleus. It carries out the reaction a 2-oxocarboxylate + H(+) = an aldehyde + CO2. It catalyses the reaction pyruvate + H(+) = acetaldehyde + CO2. The polypeptide is Putative pyruvate decarboxylase C3G9.11c (Schizosaccharomyces pombe (strain 972 / ATCC 24843) (Fission yeast)).